A 465-amino-acid chain; its full sequence is Fumarate hydratase class II (465 aa).

Substrate-binding positions include 98-100 (SGT), arginine 126, 129-132 (HPND), 139-141 (SSN), and threonine 187. Histidine 188 acts as the Proton donor/acceptor in catalysis. The active site involves serine 318. Substrate is bound by residues serine 319 and 324 to 326 (KVN).

It belongs to the class-II fumarase/aspartase family. Fumarase subfamily. As to quaternary structure, homotetramer.

It localises to the cytoplasm. The catalysed reaction is (S)-malate = fumarate + H2O. The protein operates within carbohydrate metabolism; tricarboxylic acid cycle; (S)-malate from fumarate: step 1/1. Functionally, involved in the TCA cycle. Catalyzes the stereospecific interconversion of fumarate to L-malate. The protein is Fumarate hydratase class II of Yersinia pestis.